The primary structure comprises 428 residues: Metal tolerance protein 10 (428 aa).

Residues 1–140 (MPLNSYIFFL…EMKKLAKSER (140 aa)) lie on the Cytoplasmic side of the membrane. A helical transmembrane segment spans residues 141–161 (LAVHISNATNLVLFVAKVYAS). Over 162 to 167 (MESRSM) the chain is Vacuolar. A helical membrane pass occupies residues 168-188 (AVIASTLDSLLDLLSGFILWF). Topologically, residues 189–209 (TANAMRKPNQFHYPIGKRRMQ) are cytoplasmic. Residues 210-230 (PVGIIVFASVMATLGLQVLLE) form a helical membrane-spanning segment. Residues 231–248 (SGRQLVAKSGIHMNSTEE) are Vacuolar-facing. A helical membrane pass occupies residues 249-269 (KWMIGIMVSVTIVKFLLMLYC). Over 270 to 287 (RGFQNEIVRAYAQDHLFD) the chain is Cytoplasmic. Residues 288 to 308 (VVTNSIGLATAVLAVKFYWWI) traverse the membrane as a helical segment. Topologically, residues 309–311 (DPT) are vacuolar. Residues 312–332 (GAILIALYTIATWARTVLENV) form a helical membrane-spanning segment. Residues 333-428 (HSLIGRSAPP…FTHRPEHKCN (96 aa)) are Cytoplasmic-facing.

The protein belongs to the cation diffusion facilitator (CDF) transporter (TC 2.A.4) family. SLC30A subfamily.

It localises to the vacuole membrane. Its function is as follows. Involved in sequestration of excess metal in the cytoplasm into vacuoles to maintain metal homeostasis. This Arabidopsis thaliana (Mouse-ear cress) protein is Metal tolerance protein 10 (MTP10).